The primary structure comprises 359 residues: Peptide chain release factor 1 (359 aa).

Position 236 is an N5-methylglutamine (Q236).

This sequence belongs to the prokaryotic/mitochondrial release factor family. Methylated by PrmC. Methylation increases the termination efficiency of RF1.

The protein resides in the cytoplasm. Its function is as follows. Peptide chain release factor 1 directs the termination of translation in response to the peptide chain termination codons UAG and UAA. This Streptococcus agalactiae serotype Ia (strain ATCC 27591 / A909 / CDC SS700) protein is Peptide chain release factor 1.